The following is a 129-amino-acid chain: Glycine cleavage system H protein (129 aa).

The Lipoyl-binding domain occupies 24-106 (SYTVGITEHA…YGEGWFFRVM (83 aa)). Lys65 carries the N6-lipoyllysine modification.

It belongs to the GcvH family. In terms of assembly, the glycine cleavage system is composed of four proteins: P, T, L and H. Requires (R)-lipoate as cofactor.

Functionally, the glycine cleavage system catalyzes the degradation of glycine. The H protein shuttles the methylamine group of glycine from the P protein to the T protein. The protein is Glycine cleavage system H protein of Shewanella sp. (strain MR-7).